Consider the following 272-residue polypeptide: Putative phosphoenolpyruvate synthase regulatory protein (272 aa).

ADP is bound at residue 152 to 159 (GVSRCGKT).

The protein belongs to the pyruvate, phosphate/water dikinase regulatory protein family. PSRP subfamily.

It carries out the reaction [pyruvate, water dikinase] + ADP = [pyruvate, water dikinase]-phosphate + AMP + H(+). It catalyses the reaction [pyruvate, water dikinase]-phosphate + phosphate + H(+) = [pyruvate, water dikinase] + diphosphate. Functionally, bifunctional serine/threonine kinase and phosphorylase involved in the regulation of the phosphoenolpyruvate synthase (PEPS) by catalyzing its phosphorylation/dephosphorylation. This is Putative phosphoenolpyruvate synthase regulatory protein from Ectopseudomonas mendocina (strain ymp) (Pseudomonas mendocina).